Here is a 109-residue protein sequence, read N- to C-terminus: Putative pterin-4-alpha-carbinolamine dehydratase (109 aa).

This sequence belongs to the pterin-4-alpha-carbinolamine dehydratase family.

It catalyses the reaction (4aS,6R)-4a-hydroxy-L-erythro-5,6,7,8-tetrahydrobiopterin = (6R)-L-erythro-6,7-dihydrobiopterin + H2O. The chain is Putative pterin-4-alpha-carbinolamine dehydratase from Rickettsia canadensis (strain McKiel).